Here is a 584-residue protein sequence, read N- to C-terminus: POTE ankyrin domain family member D (584 aa).

ANK repeat units lie at residues 172–201 (EKRTALHLASANGNSEVVQLLLDRRCQLNV), 205–234 (KKRTALIKAIQCQEDECVLMLLEHGADRNI), 238–267 (YGNTALHYAIYNEDKLMAKALLLYGADIES), 271–300 (CGLTPLLLGVHEQKQQVVKFLIKKKANLNV), 304–333 (YGRTALILAVCCGSASIVNLLLEQNVDVSS), and 337–366 (SGQTAREYAVSSHHHVICELLSDYKEKQML). Positions 369–502 (SSENSNPEQD…ILTNKQKQIE (134 aa)) are disordered. 3 stretches are compositionally biased toward basic and acidic residues: residues 377–392 (QDLKLTSEEESQRLKV), 401–412 (MSQEPEINKDCD), and 466–481 (EEYHSDEQNDTRKQLS). The span at 482–498 (EEQNTGISQDEILTNKQ) shows a compositional bias: polar residues. The stretch at 494–583 (LTNKQKQIEV…LNEEALTKTN (90 aa)) forms a coiled coil.

It belongs to the POTE family. In terms of tissue distribution, expressed in prostate, ovary, testis, placenta and prostate cancer cell lines. Localizes to basal and terminal prostate epithelial cells.

It is found in the cell membrane. The sequence is that of POTE ankyrin domain family member D (POTED) from Homo sapiens (Human).